The chain runs to 299 residues: F-actin-capping protein subunit alpha-3 (299 aa).

Residues Ser-2 and Ser-290 each carry the phosphoserine modification.

Belongs to the F-actin-capping protein alpha subunit family. In terms of assembly, component of the F-actin capping complex, composed of a heterodimer of an alpha and a beta subunit. Component of the WASH complex, composed of F-actin-capping protein subunit alpha (CAPZA1, CAPZA2 or CAPZA3), F-actin-capping protein subunit beta (CAPZB), WASHC1, WASHC2, WASHC3, WASHC4 and WASHC5. In terms of tissue distribution, exclusively expressed in the testis.

Its subcellular location is the cytoplasm. The protein localises to the cytoskeleton. Its function is as follows. F-actin-capping proteins bind in a Ca(2+)-independent manner to the fast growing ends of actin filaments (barbed end) thereby blocking the exchange of subunits at these ends. Unlike other capping proteins (such as gelsolin and severin), these proteins do not sever actin filaments. May play a role in the morphogenesis of spermatid. This chain is F-actin-capping protein subunit alpha-3 (Capza3), found in Rattus norvegicus (Rat).